We begin with the raw amino-acid sequence, 461 residues long: Probable ribonuclease FAU-1 (461 aa).

An S1 motif domain is found at 89-158; that stretch reads GAVFYGEVTE…ARPSLATALR (70 aa).

It belongs to the FAU-1 family.

Probable RNase involved in rRNA stability through maturation and/or degradation of precursor rRNAs. Binds to RNA in loop regions with AU-rich sequences. The protein is Probable ribonuclease FAU-1 of Natronomonas pharaonis (strain ATCC 35678 / DSM 2160 / CIP 103997 / JCM 8858 / NBRC 14720 / NCIMB 2260 / Gabara) (Halobacterium pharaonis).